A 310-amino-acid chain; its full sequence is MPLRLVFMGTPDFAVPTLLALSAYGHDIAAVYSREPKPAGRGMKLQHSPVAQEAQRFGIPVLTPKTLKTDEALAEFRSHDADAAVVVAYGMILPQAILDAPRLGCYNLHGSLLPRWRGAAPLNRAIMAGDAESGVMVMKMDAGLDTGDVAMAERIAITDAMTVTDLHDSLARLGADLMVRAMAALERDQLQLTRQSEHGVTYAAKIDKAEAKIDFARPAQAVLRHIHGLSPFPGAWCELPIDGEAVRVKILRCASATGGGAPGQVLDDRLTIACQDGAIRVLQLQRAGKQPMQADEFLRGTPIAAGAVIV.

(6S)-5,6,7,8-tetrahydrofolate is bound at residue S111–P114.

The protein belongs to the Fmt family.

It catalyses the reaction L-methionyl-tRNA(fMet) + (6R)-10-formyltetrahydrofolate = N-formyl-L-methionyl-tRNA(fMet) + (6S)-5,6,7,8-tetrahydrofolate + H(+). Attaches a formyl group to the free amino group of methionyl-tRNA(fMet). The formyl group appears to play a dual role in the initiator identity of N-formylmethionyl-tRNA by promoting its recognition by IF2 and preventing the misappropriation of this tRNA by the elongation apparatus. The polypeptide is Methionyl-tRNA formyltransferase (Rhodopseudomonas palustris (strain BisB5)).